The sequence spans 405 residues: MRFIDEAVVTVKAGDGGNGIASFRREKYVPRGGPDGGDGGKGGDVYVIAEDNTNTLVDYRYTRRHDAMRAENGHSRNCSGKGSDDLFLPVPIGTTIVDTETDEVLGDLIEIGQTLLIAKGGDGGLGNTHFKSSTNQAPRKATSGFEGELKVLKFELKVVADVGLIGLPNAGKSTFIRQVSAARPKVADYPFTTLVPNLGVVDIGRHRSFVMADIPGLIEGASEGAGLGIRFLKHVARTRRLLHLVDIKPIDGSDPVENARIILNELDRFSPELANLPQILVLNKIDQVPEEELNELCTHIVAELGWTGIVFRTATLTGEGVDAIKYHLMNEIEREREREIEDPIFAEAQKARFERLEAEVRLNTEAQREAYRAARKAAREGTDLSDDDFDGSDDDDDGVEVIYAP.

The Obg domain occupies 1–159 (MRFIDEAVVT…KVLKFELKVV (159 aa)). Residues 160–333 (ADVGLIGLPN…IKYHLMNEIE (174 aa)) form the OBG-type G domain. Residues 166-173 (GLPNAGKS), 191-195 (FTTLV), 213-216 (DIPG), 283-286 (NKID), and 314-316 (ATL) contribute to the GTP site. Ser-173 and Thr-193 together coordinate Mg(2+). Residues 371 to 382 (YRAARKAAREGT) show a composition bias toward basic and acidic residues. The segment at 371–405 (YRAARKAAREGTDLSDDDFDGSDDDDDGVEVIYAP) is disordered. Positions 383–399 (DLSDDDFDGSDDDDDGV) are enriched in acidic residues.

Belongs to the TRAFAC class OBG-HflX-like GTPase superfamily. OBG GTPase family. As to quaternary structure, monomer. It depends on Mg(2+) as a cofactor.

The protein localises to the cytoplasm. An essential GTPase which binds GTP, GDP and possibly (p)ppGpp with moderate affinity, with high nucleotide exchange rates and a fairly low GTP hydrolysis rate. Plays a role in control of the cell cycle, stress response, ribosome biogenesis and in those bacteria that undergo differentiation, in morphogenesis control. This chain is GTPase Obg, found in Psychrobacter arcticus (strain DSM 17307 / VKM B-2377 / 273-4).